Reading from the N-terminus, the 546-residue chain is Arginine--tRNA ligase (546 aa).

Residues 122-132 (ANPTGPFTVGH) carry the 'HIGH' region motif.

The protein belongs to the class-I aminoacyl-tRNA synthetase family. Monomer.

The protein resides in the cytoplasm. It catalyses the reaction tRNA(Arg) + L-arginine + ATP = L-arginyl-tRNA(Arg) + AMP + diphosphate. In Thermotoga petrophila (strain ATCC BAA-488 / DSM 13995 / JCM 10881 / RKU-1), this protein is Arginine--tRNA ligase.